The primary structure comprises 330 residues: Dof zinc finger protein DOF2.4 (330 aa).

A compositionally biased stretch (polar residues) spans 14–25 (NWQQAPPSNYNH). The interval 14–70 (NWQQAPPSNYNHDGTGASANGGHVLRPQLQPQQQPQQQPHPNGSGGGGGGGGGSIRA) is disordered. The segment covering 40–55 (PQLQPQQQPQQQPHPN) has biased composition (low complexity). Positions 56–68 (GSGGGGGGGGGSI) are enriched in gly residues. The Dof-type zinc finger occupies 89–143 (LKCPRCESTNTKFCYFNNYSLTQPRHFCKTCRRYWTRGGALRNVPVGGGCRRNRR). 4 residues coordinate Zn(2+): Cys91, Cys94, Cys116, and Cys119. 2 disordered regions span residues 133–165 (PVGGGCRRNRRTKSNSNNNNNSTATSNNTSFSS) and 255–276 (QQSSMGGGNLEDSSNPNPSANG). The span at 146 to 165 (SNSNNNNNSTATSNNTSFSS) shows a compositional bias: low complexity. Positions 265 to 276 (EDSSNPNPSANG) are enriched in polar residues.

As to expression, specific to the vascular tissues. The PEAR proteins (e.g. DOF2.4, DOF5.1, DOF3.2, DOF1.1, DOF5.6 and DOF5.3) form a short-range concentration gradient that peaks at protophloem sieve elements (PSE).

Its subcellular location is the nucleus. The protein localises to the symplast. Transcription factor that binds specifically to a 5'-AA[AG]G-3' consensus core sequence. Probably involved in early processes for vascular development. The PEAR proteins (e.g. DOF2.4, DOF5.1, DOF3.2, DOF1.1, DOF5.6 and DOF5.3) activate gene expression that promotes radial growth of protophloem sieve elements. Triggers the transcription of HD-ZIP III genes, especially in the central domain of vascular tissue. This chain is Dof zinc finger protein DOF2.4, found in Arabidopsis thaliana (Mouse-ear cress).